A 299-amino-acid polypeptide reads, in one-letter code: Putative peptidyl-prolyl cis-trans isomerase jhp_0161 (299 aa).

The N-terminal stretch at 1-21 (MKKNILNLALVGALSASFLMA) is a signal peptide. The region spanning 154–253 (KQEAHARHIL…FGYHIIYLIS (100 aa)) is the PpiC domain.

It carries out the reaction [protein]-peptidylproline (omega=180) = [protein]-peptidylproline (omega=0). This chain is Putative peptidyl-prolyl cis-trans isomerase jhp_0161, found in Helicobacter pylori (strain J99 / ATCC 700824) (Campylobacter pylori J99).